Reading from the N-terminus, the 87-residue chain is Small ribosomal subunit protein uS17 (87 aa).

The protein belongs to the universal ribosomal protein uS17 family. As to quaternary structure, part of the 30S ribosomal subunit.

Its function is as follows. One of the primary rRNA binding proteins, it binds specifically to the 5'-end of 16S ribosomal RNA. The chain is Small ribosomal subunit protein uS17 from Hydrogenovibrio crunogenus (strain DSM 25203 / XCL-2) (Thiomicrospira crunogena).